Consider the following 368-residue polypeptide: Phosphate acyltransferase (368 aa).

The protein belongs to the PlsX family. As to quaternary structure, homodimer. Probably interacts with PlsY.

Its subcellular location is the cytoplasm. It carries out the reaction a fatty acyl-[ACP] + phosphate = an acyl phosphate + holo-[ACP]. The protein operates within lipid metabolism; phospholipid metabolism. Catalyzes the reversible formation of acyl-phosphate (acyl-PO(4)) from acyl-[acyl-carrier-protein] (acyl-ACP). This enzyme utilizes acyl-ACP as fatty acyl donor, but not acyl-CoA. The chain is Phosphate acyltransferase from Granulibacter bethesdensis (strain ATCC BAA-1260 / CGDNIH1).